Here is a 1995-residue protein sequence, read N- to C-terminus: Myosin-14 (1995 aa).

The interval 1–46 is disordered; it reads MAAVTMSVPGRKAPPRPGPVPEAAQPFLFTPRGPSAGGGPGSGTSP. An N-acetylalanine modification is found at Ala2. Positions 51 to 101 constitute a Myosin N-terminal SH3-like domain; the sequence is TARRLVWVPSELHGFEAAALRDEGEEEAEVELAESGRRLRLPRDQIQRMNP. Ser60 is subject to Phosphoserine. The 696-residue stretch at 105–800 folds into the Myosin motor domain; that stretch reads SKAEDMAELT…VLAQLEEERD (696 aa). Residue 198 to 205 coordinates ATP; that stretch reads GESGAGKT. The actin-binding stretch occupies residues 678 to 700; that stretch reads LSRLMATLSNTNPSFVRCIVPNH. The region spanning 803–832 is the IQ domain; the sequence is VTDIIVSFQAAARGYLARRAFQKRQQQQSA. A coiled-coil region spans residues 862-1947; that stretch reads LQVTRQDEVL…VTTLRNRLRR (1086 aa). The residue at position 1194 (Thr1194) is a Phosphothreonine. Disordered regions lie at residues 1371-1415, 1592-1623, 1905-1942, and 1958-1995; these read EEAA…RRAA, QHER…VERD, EAEE…TTLR, and RQVF…AHPQ. Residues 1930-1942 show a composition bias toward polar residues; that stretch reads SAESMNREVTTLR. Phosphoserine occurs at positions 1969, 1980, 1983, and 1989. A compositionally biased stretch (pro residues) spans 1981–1995; the sequence is GPSPEPEGSPPAHPQ.

Belongs to the TRAFAC class myosin-kinesin ATPase superfamily. Myosin family. As to quaternary structure, myosin is a hexameric protein that consists of 2 heavy chain subunits (MHC), 2 alkali light chain subunits (MLC) and 2 regulatory light chain subunits (MLC-2). In terms of tissue distribution, high levels of expression are found in brain (highest in corpus callosum), heart, kidney, liver, lung, small intestine, colon and skeletal muscle. Expression is low in organs composed mainly of smooth muscle, such as aorta, uterus and urinary bladder. No detectable expression is found in thymus, spleen, placenta and lymphocytes.

In terms of biological role, cellular myosin that appears to play a role in cytokinesis, cell shape, and specialized functions such as secretion and capping. This is Myosin-14 (MYH14) from Homo sapiens (Human).